The sequence spans 98 residues: Small ribosomal subunit protein bS6 (98 aa).

It belongs to the bacterial ribosomal protein bS6 family.

In terms of biological role, binds together with bS18 to 16S ribosomal RNA. The polypeptide is Small ribosomal subunit protein bS6 (Moorella thermoacetica (strain ATCC 39073 / JCM 9320)).